The primary structure comprises 123 residues: MANPAHISAVRTLYKKILVLHRFLPIDLRALGDQYVKDEFRRHKTSSDEEAKHFMVEWQNYKDTLQTQVLEAMGNKKLVFGADLSEDKLKHFQDEQIGQLYELMLESTKPNRQFDIQEEGTPK.

A mitochondrion-targeting transit peptide spans 1 to 31 (MANPAHISAVRTLYKKILVLHRFLPIDLRAL).

Belongs to the complex I LYR family. SDHAF3 subfamily. Interacts with sdhb within an sdha-sdhb subcomplex.

The protein localises to the mitochondrion matrix. Functionally, plays an essential role in the assembly of succinate dehydrogenase (SDH), an enzyme complex (also referred to as respiratory complex II) that is a component of both the tricarboxylic acid (TCA) cycle and the mitochondrial electron transport chain, and which couples the oxidation of succinate to fumarate with the reduction of ubiquinone (coenzyme Q) to ubiquinol. Promotes maturation of the iron-sulfur protein subunit sdhb of the SDH catalytic dimer, protecting it from the deleterious effects of oxidants. May act together with SDHAF1. In Danio rerio (Zebrafish), this protein is Succinate dehydrogenase assembly factor 3, mitochondrial.